Here is a 1000-residue protein sequence, read N- to C-terminus: ATP-dependent DNA/RNA helicase DHX36 (1000 aa).

A required for recruitment to cytoplasmic stress granules region spans residues 1–43 (MSYDYHQSWSRDGGPRGSGQGSGGGGGGSRGSGGGGGGRGGRG). Residues 1–53 (MSYDYHQSWSRDGGPRGSGQGSGGGGGGSRGSGGGGGGRGGRGRHPAHLKGRE) form a disordered region. The interval 1–96 (MSYDYHQSWS…IVQLLNSVQA (96 aa)) is required for the pre-miR-134 transport. The segment at 1-192 (MSYDYHQSWS…KKTDPRYIEM (192 aa)) is necessary for nuclear and nucleolar caps localizations. Over residues 15 to 40 (PRGSGQGSGGGGGGSRGSGGGGGGRG) the composition is skewed to gly residues. The segment at 45–67 (HPAHLKGREIGLWYAKKQTQKNK) is DSM (DHX36-specific motif). Positions 45–97 (HPAHLKGREIGLWYAKKQTQKNKEAERQERAVVHMDERREEQIVQLLNSVQAK) are required for G4-DNA- and G4-RNA-binding. RecA-like domain regions lie at residues 98–378 (NDKD…MIHI) and 379–620 (PGFT…DYQL). Position 153 is a phosphoserine (S153). The region spanning 209 to 379 (VNLINNHQVT…FGNCPMIHIP (171 aa)) is the Helicase ATP-binding domain. 225-230 (GCGKTT) lines the ATP pocket. The interval 257 to 309 (RRISAISVAERVAAERAESCGNGNSTGYQIRLQSRLPRKQGSILYCTTGIILQ) is necessary for interaction with single-stranded DNA at the 3'-end of the G4-DNA structure. Positions 326–329 (DEIH) match the DEAH box motif. 2 residues coordinate Mg(2+): E327 and H329. Positions 469–639 (ALIRYIVLEE…ELCLQIKILR (171 aa)) constitute a Helicase C-terminal domain. The segment at 490 to 549 (WDNISTLHDLLMSQVMFKSDRFLIIPLHSLMPTVNQTQVFKKTPPGVRKIVIATNIAETS) is necessary for interaction with single-stranded DNA at the 3'-end of the G4-DNA structure. The short motif at 509–520 (DRFLIIPLHSLM) is the Nuclear localization signal element. ATP-binding positions include S549 and 594–597 (RAGR). The WH domain stretch occupies residues 621 to 690 (PEILRTPLEE…LGVHLARLPV (70 aa)). 3 necessary for interaction with single-stranded DNA at the 3'-end of the G4-DNA structure regions span residues 630–689 (ELCL…ARLP), 841–852 (NLGKKRKMVKVH), and 862–892 (HPKS…IYLY). Positions 833 to 897 (PKVAKIRLNL…SIYLYDCTEV (65 aa)) are OB-fold-like subdomains. K939 carries the N6-acetyllysine modification.

As to quaternary structure, found in a multi-helicase-TICAM1 complex at least composed of DHX36, DDX1, DDX21 and TICAM1; this complex exists in resting cells with or without dsRNA poly(I:C) ligand stimulation. Interacts (via C-terminus) with TICAM1 (via TIR domain). Interacts (via C-terminus) with DDX21; this interaction serves as bridges to TICAM1. Interacts with TERT; this interaction is dependent on the ability of DHX36 to bind to the G-quadruplex RNA (G4-RNA) structure present in the telomerase RNA template component (TERC). Interacts with DKC1; this interaction is dependent on the ability of DHX36 to bind to the G4-RNA structure present in TERC. Interacts with PARN; this interaction stimulates PARN to enhance uPA mRNA decay. Interacts with EXOSC3; this interaction occurs in a RNase-insensitive manner. Interacts with EXOSC10; this interaction occurs in a RNase-insensitive manner. Interacts with ILF3; this interaction occurs in a RNA-dependent manner. Interacts with ELAVL1; this interaction occurs in an RNA-dependent manner. Interacts with DDX5; this interaction occurs in a RNA-dependent manner. Interacts with DDX17; this interaction occurs in a RNA-dependent manner. Interacts with HDAC1; this interaction occurs in a RNA-dependent manner. Interacts with HDAC3; this interaction occurs in a RNA-dependent manner. Interacts with HDAC4. Interacts with AGO1. Interacts with AGO2. Interacts with ERCC6. Requires Mg(2+) as cofactor.

The protein resides in the nucleus. Its subcellular location is the cytoplasm. It localises to the cytosol. It is found in the stress granule. The protein localises to the nucleus speckle. The protein resides in the chromosome. Its subcellular location is the telomere. It localises to the mitochondrion. It is found in the perikaryon. The protein localises to the cell projection. The protein resides in the dendrite. Its subcellular location is the axon. The catalysed reaction is ATP + H2O = ADP + phosphate + H(+). ATPase activity is enhanced in the presence of homomeric poly(U) RNAs, but not by double-stranded DNA (dsDNA), double-stranded RNA (dsRNA) and tRNA. In terms of biological role, multifunctional ATP-dependent helicase that unwinds G-quadruplex (G4) structures. Plays a role in many biological processes such as genomic integrity, gene expression regulations and as a sensor to initiate antiviral responses. G4 structures correspond to helical structures containing guanine tetrads. Binds with high affinity to and unwinds G4 structures that are formed in nucleic acids (G4-DNA and G4-RNA). Plays a role in genomic integrity. Converts the G4-RNA structure present in telomerase RNA template component (TREC) into a double-stranded RNA to promote P1 helix formation that acts as a template boundary ensuring accurate reverse transcription. Plays a role in transcriptional regulation. Resolves G4-DNA structures in promoters of genes, such as YY1, KIT/c-kit and ALPL and positively regulates their expression. Plays a role in post-transcriptional regulation. Unwinds a G4-RNA structure located in the 3'-UTR polyadenylation site of the pre-mRNA TP53 and stimulates TP53 pre-mRNA 3'-end processing in response to ultraviolet (UV)-induced DNA damage. Binds to the precursor-microRNA-134 (pre-miR-134) terminal loop and regulates its transport into the synapto-dendritic compartment. Involved in the pre-miR-134-dependent inhibition of target gene expression and the control of dendritic spine size. Plays a role in the regulation of cytoplasmic mRNA translation and mRNA stability. Binds to both G4-RNA structures and alternative non-quadruplex-forming sequence within the 3'-UTR of the PITX1 mRNA regulating negatively PITX1 protein expression. Binds to both G4-RNA structure in the 5'-UTR and AU-rich elements (AREs) localized in the 3'-UTR of NKX2-5 mRNA to either stimulate protein translation or induce mRNA decay in an ELAVL1-dependent manner, respectively. Also binds to ARE sequences present in several mRNAs mediating exosome-mediated 3'-5' mRNA degradation. Involved in cytoplasmic urokinase-type plasminogen activator (uPA) mRNA decay. Component of a multi-helicase-TICAM1 complex that acts as a cytoplasmic sensor of viral double-stranded RNA (dsRNA) and plays a role in the activation of a cascade of antiviral responses including the induction of pro-inflammatory cytokines via the adapter molecule TICAM1. Required for the early embryonic development and hematopoiesis. Involved in the regulation of cardioblast differentiation and proliferation during heart development. Involved in spermatogonia differentiation. May play a role in ossification. In Rattus norvegicus (Rat), this protein is ATP-dependent DNA/RNA helicase DHX36.